Consider the following 65-residue polypeptide: Large ribosomal subunit protein bL35 (65 aa).

Residues 28-53 form a disordered region; sequence NGSHNLEKKNRKRTRRLHQSTMLDNA. The segment covering 36–45 has biased composition (basic residues); it reads KNRKRTRRLH.

This sequence belongs to the bacterial ribosomal protein bL35 family.

The sequence is that of Large ribosomal subunit protein bL35 from Chlorobium luteolum (strain DSM 273 / BCRC 81028 / 2530) (Pelodictyon luteolum).